The chain runs to 185 residues: DNA-directed RNA polymerase 22 kDa subunit (185 aa).

The protein belongs to the poxviridae DNA-directed RNA polymerase 22 kDa subunit family. The DNA-dependent RNA polymerase used for intermediate and late genes expression consists of eight subunits Rpo30/OPG66, Rpo7/OPG90, Rpo22/OPG103, Rpo147/OPG105, Rpo18/OPG119, Rpo19/OPG131, Rpo132/OPG151 and Rpo35/OPG156. The same holoenzyme, with the addition of the transcription-specificity factor OPG109, is used for early gene expression.

It is found in the virion. It carries out the reaction RNA(n) + a ribonucleoside 5'-triphosphate = RNA(n+1) + diphosphate. Part of the DNA-dependent RNA polymerase which catalyzes the transcription of viral DNA into RNA using the four ribonucleoside triphosphates as substrates. Responsible for the transcription of early, intermediate and late genes. DNA-dependent RNA polymerase associates with the early transcription factor (ETF), itself composed of OPG118 and OPG133, thereby allowing the early genes transcription. Late transcription, and probably also intermediate transcription, require newly synthesized RNA polymerase. The polypeptide is DNA-directed RNA polymerase 22 kDa subunit (OPG103) (Variola virus (isolate Human/India/Ind3/1967) (VARV)).